The chain runs to 61 residues: DNA-directed RNA polymerase subunit Rpo10 (61 aa).

Positions 6, 9, 42, and 43 each coordinate Zn(2+).

Belongs to the archaeal Rpo10/eukaryotic RPB10 RNA polymerase subunit family. As to quaternary structure, part of the RNA polymerase complex. Requires Zn(2+) as cofactor.

The protein resides in the cytoplasm. It carries out the reaction RNA(n) + a ribonucleoside 5'-triphosphate = RNA(n+1) + diphosphate. DNA-dependent RNA polymerase (RNAP) catalyzes the transcription of DNA into RNA using the four ribonucleoside triphosphates as substrates. This is DNA-directed RNA polymerase subunit Rpo10 from Methanothrix thermoacetophila (strain DSM 6194 / JCM 14653 / NBRC 101360 / PT) (Methanosaeta thermophila).